A 479-amino-acid polypeptide reads, in one-letter code: Ribulose bisphosphate carboxylase large chain (479 aa).

Residues 1 to 2 (MS) constitute a propeptide that is removed on maturation. Substrate contacts are provided by Asn123 and Thr173. The active-site Proton acceptor is Lys175. Position 177 (Lys177) interacts with substrate. Mg(2+)-binding residues include Lys201, Asp203, and Glu204. Residue Lys201 is modified to N6-carboxylysine. A Phosphoserine modification is found at Ser208. His294 (proton acceptor) is an active-site residue. Residues Arg295 and His327 each contribute to the substrate site. Phosphothreonine is present on Thr330. Ser379 lines the substrate pocket.

This sequence belongs to the RuBisCO large chain family. Type I subfamily. Heterohexadecamer of 8 large chains and 8 small chains; disulfide-linked. The disulfide link is formed within the large subunit homodimers. It depends on Mg(2+) as a cofactor. The disulfide bond which can form in the large chain dimeric partners within the hexadecamer appears to be associated with oxidative stress and protein turnover.

The protein resides in the plastid. The protein localises to the chloroplast. It catalyses the reaction 2 (2R)-3-phosphoglycerate + 2 H(+) = D-ribulose 1,5-bisphosphate + CO2 + H2O. The catalysed reaction is D-ribulose 1,5-bisphosphate + O2 = 2-phosphoglycolate + (2R)-3-phosphoglycerate + 2 H(+). In terms of biological role, ruBisCO catalyzes two reactions: the carboxylation of D-ribulose 1,5-bisphosphate, the primary event in carbon dioxide fixation, as well as the oxidative fragmentation of the pentose substrate in the photorespiration process. Both reactions occur simultaneously and in competition at the same active site. This chain is Ribulose bisphosphate carboxylase large chain, found in Arabis hirsuta (Hairy rock-cress).